The sequence spans 279 residues: Tumor necrosis factor ligand superfamily member 6 (279 aa).

Topologically, residues 1–78 (MQQPMNYPCP…PLKKKDHNTN (78 aa)) are cytoplasmic. Positions 30-70 (FPCPSCGPRGPDQRRPPPPPPPVSPLPPPSQPLPLPPLTPL) are disordered. Residues 45–68 (PPPPPPPVSPLPPPSQPLPLPPLT) show a composition bias toward pro residues. A helical; Signal-anchor for type II membrane protein transmembrane segment spans residues 79–100 (LWLPVVFFMVLVALVGMGLGMY). Over 101–279 (QLFHLQKELA…SKTFFGLYKL (179 aa)) the chain is Extracellular. Asparagine 117 is a glycosylation site (N-linked (GlcNAc...) asparagine). Polar residues predominate over residues 126–135 (EKQIANPSTP). Residues 126–150 (EKQIANPSTPSEKKEPRSVAHLTGN) form a disordered region. Residues 143 to 279 (SVAHLTGNPH…SKTFFGLYKL (137 aa)) enclose the THD domain. N-linked (GlcNAc...) asparagine glycosylation occurs at asparagine 182. The cysteines at positions 200 and 231 are disulfide-linked. Asparagine 248 and asparagine 258 each carry an N-linked (GlcNAc...) asparagine glycan.

This sequence belongs to the tumor necrosis factor family. Homotrimer. Interacts with ARHGAP9, BAIAP2L1, BTK, CACNB3, CACNB4, CRK, DLG2, DNMBP, DOCK4, EPS8L3, FGR, FYB1, FYN, HCK, ITK, ITSN2, KALRN, LYN, MACC1, MIA, MPP4, MYO15A, NCF1, NCK1, NCK2, NCKIPSD, OSTF1, PIK3R1, PSTPIP1, RIMBP3C, SAMSN1, SH3GL3, SH3PXD2B, SH3PXD2A, SH3RF2, SKAP2, SNX33, SNX9, SORBS3, SPTA1, SRC, SRGAP1, SRGAP2, SRGAP3, TEC, TJP3 and YES1. The soluble form derives from the membrane form by proteolytic processing. The membrane-bound form undergoes two successive intramembrane proteolytic cleavages. The first one is processed by ADAM10 producing an N-terminal fragment, which lacks the receptor-binding extracellular domain. This ADAM10-processed FasL (FAsL APL) remnant form is still membrane anchored and further processed by SPPL2A that liberates the FasL intracellular domain (FasL ICD). FasL shedding by ADAM10 is a prerequisite for subsequent intramembrane cleavage by SPPL2A in T-cells. In terms of processing, phosphorylated by FGR on tyrosine residues; this is required for ubiquitination and subsequent internalization. Post-translationally, N-glycosylated. Glycosylation enhances apoptotic activity. Monoubiquitinated. As to expression, expressed in T-cells. Expressed in natural killer cells.

It localises to the cell membrane. The protein resides in the cytoplasmic vesicle lumen. It is found in the lysosome lumen. Its subcellular location is the secreted. The protein localises to the nucleus. Cytokine that binds to TNFRSF6/FAS, a receptor that transduces the apoptotic signal into cells. Involved in cytotoxic T-cell-mediated apoptosis, natural killer cell-mediated apoptosis and in T-cell development. Initiates fratricidal/suicidal activation-induced cell death (AICD) in antigen-activated T-cells contributing to the termination of immune responses. TNFRSF6/FAS-mediated apoptosis also has a role in the induction of peripheral tolerance. Binds to TNFRSF6B/DcR3, a decoy receptor that blocks apoptosis. Its function is as follows. Induces FAS-mediated activation of NF-kappa-B, initiating non-apoptotic signaling pathways. Can induce apoptosis but does not appear to be essential for this process. In terms of biological role, cytoplasmic form induces gene transcription inhibition. The polypeptide is Tumor necrosis factor ligand superfamily member 6 (Faslg) (Mus musculus (Mouse)).